We begin with the raw amino-acid sequence, 42 residues long: Beta-defensin 13 (42 aa).

Disulfide bonds link Cys9–Cys38, Cys16–Cys31, and Cys21–Cys39.

The protein belongs to the beta-defensin family. As to expression, neutrophilic granules.

The protein localises to the secreted. In terms of biological role, has bactericidal activity. Active against E.coli ML35 and S.aureus 502A. This chain is Beta-defensin 13 (DEFB13), found in Bos taurus (Bovine).